The following is a 280-amino-acid chain: Putative pyruvate, phosphate dikinase regulatory protein (280 aa).

ADP is bound at residue 147–154; that stretch reads GASRSSKT.

This sequence belongs to the pyruvate, phosphate/water dikinase regulatory protein family. PDRP subfamily.

The catalysed reaction is N(tele)-phospho-L-histidyl/L-threonyl-[pyruvate, phosphate dikinase] + ADP = N(tele)-phospho-L-histidyl/O-phospho-L-threonyl-[pyruvate, phosphate dikinase] + AMP + H(+). The enzyme catalyses N(tele)-phospho-L-histidyl/O-phospho-L-threonyl-[pyruvate, phosphate dikinase] + phosphate + H(+) = N(tele)-phospho-L-histidyl/L-threonyl-[pyruvate, phosphate dikinase] + diphosphate. Functionally, bifunctional serine/threonine kinase and phosphorylase involved in the regulation of the pyruvate, phosphate dikinase (PPDK) by catalyzing its phosphorylation/dephosphorylation. The sequence is that of Putative pyruvate, phosphate dikinase regulatory protein from Pelobacter propionicus (strain DSM 2379 / NBRC 103807 / OttBd1).